A 235-amino-acid polypeptide reads, in one-letter code: Large ribosomal subunit protein uL1 (235 aa).

It belongs to the universal ribosomal protein uL1 family. As to quaternary structure, part of the 50S ribosomal subunit.

Binds directly to 23S rRNA. The L1 stalk is quite mobile in the ribosome, and is involved in E site tRNA release. In terms of biological role, protein L1 is also a translational repressor protein, it controls the translation of the L11 operon by binding to its mRNA. The polypeptide is Large ribosomal subunit protein uL1 (Rhodospirillum centenum (strain ATCC 51521 / SW)).